An 837-amino-acid chain; its full sequence is Espin (837 aa).

9 ANK repeats span residues M1 to L31, L35 to R66, N69 to E99, S103 to A132, T137 to A167, N171 to L201, D205 to Q235, D238 to Q267, and W270 to V299. A phosphoserine mark is found at S337 and S341. Positions D339 to Q348 are enriched in basic and acidic residues. Disordered stretches follow at residues D339–H459, D477–L712, K745–L767, and E785–Y816. Residues S351–P364 are compositionally biased toward polar residues. The segment covering L376–T395 has biased composition (low complexity). Residues S400 and S401 each carry the phosphoserine modification. The span at S423–P455 shows a compositional bias: pro residues. S497, S504, and S531 each carry phosphoserine. Residues L581 to P604 are compositionally biased toward pro residues. A compositionally biased stretch (low complexity) spans S617–S626. Composition is skewed to polar residues over residues F627–N636 and P651–F662. Position 631 is a phosphoserine (S631). The region spanning D635–T652 is the WH2 domain. The segment covering S663 to E673 has biased composition (low complexity). Phosphoserine is present on residues S670, S674, and S680. Positions K738–L814 form a coiled coil.

As to quaternary structure, monomer. Interacts with PFN2. Binds F-actin in a Ca(2+)-resistant fashion. Interacts (via N-terminal) with BAIAP2 (via SH3-domain). Interacts with MYO3A (via C-terminus). Interacts with MYO3B (via C-terminus). In terms of tissue distribution, expressed at high concentration in the microvillar parallel actin bundle (PAB) of hair cells stereocilia in the cochlea and vestibular system. Detected also at high levels of a number of other sensory cell types, including taste receptor cells, solitary chemoreceptor cells, vomeronasal sensory neurons and Merkel cells. Isoform 1 is detected in testis. Isoforms 2 is detected in small intestine and kidney (at protein level). Isoforms 3, 4, 6 and 8 are expressed in Purkinje cells dendritic spines.

It is found in the cytoplasm. The protein resides in the cytoskeleton. Its subcellular location is the cell projection. It localises to the stereocilium. The protein localises to the microvillus. It is found in the cell junction. The protein resides in the dendritic spine. Its function is as follows. Multifunctional actin-bundling protein. Plays a major role in regulating the organization, dimension, dynamics and signaling capacities of the actin filament-rich microvilli in the mechanosensory and chemosensory cells. Required for the assembly and stabilization of the stereociliary parallel actin bundles. Plays a crucial role in the formation and maintenance of inner ear hair cell stereocilia. Involved in the elongation of actin in stereocilia. In extrastriolar hair cells, required for targeting MYO3B to stereocilia tips, and for regulation of stereocilia diameter and staircase formation. The chain is Espin (Espn) from Rattus norvegicus (Rat).